The following is a 300-amino-acid chain: uncharacterized protein (300 aa).

8 helical membrane-spanning segments follow: residues leucine 13 to leucine 35, methionine 45 to serine 67, tryptophan 80 to leucine 102, glycine 106 to leucine 128, isoleucine 180 to leucine 202, tyrosine 217 to leucine 236, proline 243 to valine 265, and tyrosine 275 to leucine 294.

It belongs to the EamA transporter family.

Its subcellular location is the cell membrane. This is an uncharacterized protein from Haemophilus influenzae (strain ATCC 51907 / DSM 11121 / KW20 / Rd).